A 603-amino-acid chain; its full sequence is Variable flagella 3 (603 aa).

Residues glycine 169–arginine 289 are a coiled coil. The segment covering arginine 288–arginine 297 has biased composition (basic and acidic residues). Disordered stretches follow at residues arginine 288 to alanine 526 and alanine 539 to serine 564. The span at serine 337–serine 348 shows a compositional bias: low complexity. Residues proline 364 to serine 380 show a composition bias toward basic and acidic residues. A compositionally biased stretch (polar residues) spans alanine 397 to valine 406. The segment covering glycine 486–glycine 510 has biased composition (gly residues). Residues glutamine 511–serine 520 are compositionally biased toward polar residues.

It belongs to the CCDC61 family.

It is found in the cytoplasm. The protein localises to the cytoskeleton. The protein resides in the flagellum basal body. Functionally, required for normal flagella and striated fiber formation. The protein is Variable flagella 3 of Chlamydomonas reinhardtii (Chlamydomonas smithii).